We begin with the raw amino-acid sequence, 667 residues long: Protein OS-9 (667 aa).

The signal sequence occupies residues 1-25 (MAAETLLSSLLGLLLLGLLLPATLT). The 123-residue stretch at 108 to 230 (APCLLKTKDW…TIRTPRLCPH (123 aa)) folds into the MRH domain. The cysteines at positions 110 and 123 are disulfide-linked. The a mannooligosaccharide derivative site is built by Trp-117, Trp-118, and Gln-130. Asn-177 is a glycosylation site (N-linked (GlcNAc...) asparagine). Disulfide bonds link Cys-181-Cys-216 and Cys-196-Cys-228. A mannooligosaccharide derivative contacts are provided by Asp-182, Arg-188, Glu-212, and Tyr-218. 3 disordered regions span residues 262–450 (QADS…SDRE), 506–541 (EKQS…EHRV), and 636–667 (ERQR…EFDF). Composition is skewed to basic and acidic residues over residues 263–279 (ADSK…RQDP), 304–328 (ENSK…KEET), and 396–408 (PSRE…KGDP). The segment covering 410–429 (QQNEVEEEEDDEDEDEDEDE) has biased composition (acidic residues). Over residues 430–450 (RQLLGEFEKELEGILLPSDRE) the composition is skewed to basic and acidic residues. Positions 514–523 (KKHRKRRVVP) are enriched in basic residues. The span at 636-647 (ERQRQKELESNY) shows a compositional bias: basic and acidic residues.

This sequence belongs to the OS-9 family. Component of the HRD1 complex, which comprises at least SYNV1/HRD1, DERL1/2, FAM8A1, HERPUD1/HERP, OS9, SEL1L and UBE2J1. FAM8A1 is stabilized by interaction with SYNV1, which prevents its proteasomal degradation. OS9 and UBE2J1 recruitment to the complex may be mediated by SEL1L. Through this complex, may interact with ERLEC1 and HSPA5. Interacts (via C-terminus) with CPNE6 (via second C2 domain); this interaction occurs in a calcium-dependent manner in vitro. Interacts with CREB3. Post-translationally, intramolecular disulfide bonds.

The protein resides in the endoplasmic reticulum lumen. Lectin component of the HRD1 complex, which functions in endoplasmic reticulum (ER) quality control and ER-associated degradation (ERAD). Specifically recognizes and binds improperly folded glycoproteins as well as hyperglycosylated proteins, retain them in the ER, and transfers them to the ubiquitination machinery and promote their degradation. Possible targets include TRPV4 as well as hyperglycosylated HSP90B1. This is Protein OS-9 (OS9) from Bos taurus (Bovine).